The chain runs to 166 residues: uncharacterized protein (166 aa).

Residues 25–116 (PEEPPLWVPP…QGADEVHSQH (92 aa)) form a disordered region. Ser105 carries the phosphoserine modification.

This is an uncharacterized protein from Rattus norvegicus (Rat).